A 968-amino-acid chain; its full sequence is Phosphoenolpyruvate carboxylase 3 (968 aa).

Ser-11 carries the post-translational modification Phosphoserine. Active-site residues include His-173 and Lys-603. Ser-705 bears the Phosphoserine mark.

Belongs to the PEPCase type 1 family. Homotetramer. Mg(2+) serves as cofactor. Expressed in roots and siliques, and to a lower extent in stems, leaves and flowers.

The protein localises to the cytoplasm. The catalysed reaction is oxaloacetate + phosphate = phosphoenolpyruvate + hydrogencarbonate. By light-reversible phosphorylation. In terms of biological role, through the carboxylation of phosphoenolpyruvate (PEP) it forms oxaloacetate, a four-carbon dicarboxylic acid source for the tricarboxylic acid cycle. This chain is Phosphoenolpyruvate carboxylase 3 (PPC3), found in Arabidopsis thaliana (Mouse-ear cress).